Consider the following 60-residue polypeptide: UPF0434 protein YcaR (60 aa).

This sequence belongs to the UPF0434 family.

The protein is UPF0434 protein YcaR of Escherichia coli O139:H28 (strain E24377A / ETEC).